The following is a 340-amino-acid chain: Farnesyl pyrophosphate synthase 1 (340 aa).

The isopentenyl diphosphate site is built by Lys47, Arg50, and Gln85. Mg(2+) is bound by residues Asp92 and Asp96. Dimethylallyl diphosphate is bound at residue Arg101. Position 102 (Arg102) interacts with isopentenyl diphosphate. Lys188, Thr189, Gln227, Lys244, and Lys253 together coordinate dimethylallyl diphosphate.

The protein belongs to the FPP/GGPP synthase family. It depends on Mg(2+) as a cofactor. As to expression, mainly expressed in trichomes and flowers, and, to a lower extent, in leaves, roots and stems.

Its subcellular location is the cytoplasm. It is found in the nucleus. The enzyme catalyses isopentenyl diphosphate + dimethylallyl diphosphate = (2E)-geranyl diphosphate + diphosphate. The catalysed reaction is isopentenyl diphosphate + (2E)-geranyl diphosphate = (2E,6E)-farnesyl diphosphate + diphosphate. It participates in isoprenoid biosynthesis; farnesyl diphosphate biosynthesis; farnesyl diphosphate from geranyl diphosphate and isopentenyl diphosphate: step 1/1. Its pathway is sesquiterpene biosynthesis. The protein operates within isoprenoid biosynthesis; geranyl diphosphate biosynthesis; geranyl diphosphate from dimethylallyl diphosphate and isopentenyl diphosphate: step 1/1. Its function is as follows. Catalyzes the sequential condensation of isopentenyl pyrophosphate with the allylic pyrophosphates, dimethylallyl pyrophosphate, and then with the resultant geranylpyrophosphate to the ultimate product farnesyl pyrophosphate. This Cannabis sativa (Hemp) protein is Farnesyl pyrophosphate synthase 1.